A 325-amino-acid polypeptide reads, in one-letter code: NADH-quinone oxidoreductase subunit H (325 aa).

The next 8 helical transmembrane spans lie at 11 to 31 (ILIS…CGAF), 81 to 101 (AIFT…FAIV), 114 to 134 (IGIL…LFAG), 154 to 174 (LSYE…VGSF), 186 to 206 (VWNV…GVAV), 237 to 257 (FFVG…TLFF), 265 to 285 (LPPF…FILI), and 304 to 324 (VCLP…LYNA).

This sequence belongs to the complex I subunit 1 family. NDH-1 is composed of 13 different subunits. Subunits NuoA, H, J, K, L, M, N constitute the membrane sector of the complex.

The protein resides in the cell inner membrane. The catalysed reaction is a quinone + NADH + 5 H(+)(in) = a quinol + NAD(+) + 4 H(+)(out). Functionally, NDH-1 shuttles electrons from NADH, via FMN and iron-sulfur (Fe-S) centers, to quinones in the respiratory chain. The immediate electron acceptor for the enzyme in this species is believed to be ubiquinone. Couples the redox reaction to proton translocation (for every two electrons transferred, four hydrogen ions are translocated across the cytoplasmic membrane), and thus conserves the redox energy in a proton gradient. This subunit may bind ubiquinone. The polypeptide is NADH-quinone oxidoreductase subunit H (Yersinia pseudotuberculosis serotype O:3 (strain YPIII)).